The sequence spans 236 residues: Phosphoribosylaminoimidazole-succinocarboxamide synthase (236 aa).

Belongs to the SAICAR synthetase family.

It carries out the reaction 5-amino-1-(5-phospho-D-ribosyl)imidazole-4-carboxylate + L-aspartate + ATP = (2S)-2-[5-amino-1-(5-phospho-beta-D-ribosyl)imidazole-4-carboxamido]succinate + ADP + phosphate + 2 H(+). It participates in purine metabolism; IMP biosynthesis via de novo pathway; 5-amino-1-(5-phospho-D-ribosyl)imidazole-4-carboxamide from 5-amino-1-(5-phospho-D-ribosyl)imidazole-4-carboxylate: step 1/2. This is Phosphoribosylaminoimidazole-succinocarboxamide synthase from Campylobacter jejuni subsp. doylei (strain ATCC BAA-1458 / RM4099 / 269.97).